Here is a 114-residue protein sequence, read N- to C-terminus: T cell receptor beta variable 28 (114 aa).

The first 26 residues, 1–26, serve as a signal peptide directing secretion; sequence MGIRLLCRVAFCFLAVGLVDVKVTQS. The Ig-like domain occupies 27-114; it reads SRYLVKRTGE…TSMYLCASSL (88 aa). A disulfide bridge links Cys-42 with Cys-110. N-linked (GlcNAc...) asparagine glycosylation is present at Asn-103.

In terms of assembly, alpha-beta TR is a heterodimer composed of an alpha and beta chain; disulfide-linked. The alpha-beta TR is associated with the transmembrane signaling CD3 coreceptor proteins to form the TR-CD3 (TcR or TCR). The assembly of alpha-beta TR heterodimers with CD3 occurs in the endoplasmic reticulum where a single alpha-beta TR heterodimer associates with one CD3D-CD3E heterodimer, one CD3G-CD3E heterodimer and one CD247 homodimer forming a stable octameric structure. CD3D-CD3E and CD3G-CD3E heterodimers preferentially associate with TR alpha and TR beta chains, respectively. The association of the CD247 homodimer is the last step of TcR assembly in the endoplasmic reticulum and is required for transport to the cell surface.

It localises to the cell membrane. V region of the variable domain of T cell receptor (TR) beta chain that participates in the antigen recognition. Alpha-beta T cell receptors are antigen specific receptors which are essential to the immune response and are present on the cell surface of T lymphocytes. Recognize peptide-major histocompatibility (MH) (pMH) complexes that are displayed by antigen presenting cells (APC), a prerequisite for efficient T cell adaptive immunity against pathogens. Binding of alpha-beta TR to pMH complex initiates TR-CD3 clustering on the cell surface and intracellular activation of LCK that phosphorylates the ITAM motifs of CD3G, CD3D, CD3E and CD247 enabling the recruitment of ZAP70. In turn ZAP70 phosphorylates LAT, which recruits numerous signaling molecules to form the LAT signalosome. The LAT signalosome propagates signal branching to three major signaling pathways, the calcium, the mitogen-activated protein kinase (MAPK) kinase and the nuclear factor NF-kappa-B (NF-kB) pathways, leading to the mobilization of transcription factors that are critical for gene expression and essential for T cell growth and differentiation. The T cell repertoire is generated in the thymus, by V-(D)-J rearrangement. This repertoire is then shaped by intrathymic selection events to generate a peripheral T cell pool of self-MH restricted, non-autoaggressive T cells. Post-thymic interaction of alpha-beta TR with the pMH complexes shapes TR structural and functional avidity. This is T cell receptor beta variable 28 from Homo sapiens (Human).